Consider the following 423-residue polypeptide: Core protease OPG082 (423 aa).

Active-site residues include histidine 241, aspartate 248, and cysteine 328.

The protein belongs to the peptidase C57 family.

Its subcellular location is the virion. Functionally, late protein responsible for processing most or all of the viral core and membrane proteins known to undergo morphogenesis-associated proteolysis. These proteolytic events are involved in the transformation of immature virions (IV) into mature virions (MV). Probably cleaves at least the OPG129, OPG136, OPG098, and OPG144 precursors preferentially at Ala-Gly-|-Ala motifs. Also seems to process Ala-Gly-|-Ser and Ala-Gly-|-Thr motifs. This chain is Core protease OPG082 (OPG083), found in Homo sapiens (Human).